A 207-amino-acid polypeptide reads, in one-letter code: 8-oxoguanine DNA glycosylase/AP lyase (207 aa).

Active-site residues include Lys129 and Asp147.

It belongs to the type-2 OGG1 family.

The catalysed reaction is 2'-deoxyribonucleotide-(2'-deoxyribose 5'-phosphate)-2'-deoxyribonucleotide-DNA = a 3'-end 2'-deoxyribonucleotide-(2,3-dehydro-2,3-deoxyribose 5'-phosphate)-DNA + a 5'-end 5'-phospho-2'-deoxyribonucleoside-DNA + H(+). Functionally, catalyzes the excision of an oxidatively damaged form of guanine (7,8-dihydro-8-oxoguanine = 8-oxoG) from DNA. Also cleaves the DNA backbone at apurinic/apyrimidinic sites (AP sites). Has little specificity for the base opposite oxoG. The polypeptide is 8-oxoguanine DNA glycosylase/AP lyase (Methanocaldococcus jannaschii (strain ATCC 43067 / DSM 2661 / JAL-1 / JCM 10045 / NBRC 100440) (Methanococcus jannaschii)).